A 240-amino-acid chain; its full sequence is Ribosomal RNA large subunit methyltransferase E (240 aa).

Residues 1-28 (MSSSPRSPDARPLKVRVKSARTRSSSSQ) form a disordered region. Positions 80, 82, 103, 119, and 143 each coordinate S-adenosyl-L-methionine. K183 functions as the Proton acceptor in the catalytic mechanism.

It belongs to the class I-like SAM-binding methyltransferase superfamily. RNA methyltransferase RlmE family.

It is found in the cytoplasm. The enzyme catalyses uridine(2552) in 23S rRNA + S-adenosyl-L-methionine = 2'-O-methyluridine(2552) in 23S rRNA + S-adenosyl-L-homocysteine + H(+). Its function is as follows. Specifically methylates the uridine in position 2552 of 23S rRNA at the 2'-O position of the ribose in the fully assembled 50S ribosomal subunit. This chain is Ribosomal RNA large subunit methyltransferase E, found in Azorhizobium caulinodans (strain ATCC 43989 / DSM 5975 / JCM 20966 / LMG 6465 / NBRC 14845 / NCIMB 13405 / ORS 571).